The sequence spans 63 residues: MSQEKVQRHGGGDGEEESGPEAAGQERREKLGEDVDAILDEIDDVLEENAEDFVRAYVQKGGQ.

2 stretches are compositionally biased toward basic and acidic residues: residues 1 to 12 and 24 to 33; these read MSQEKVQRHGGG and GQERREKLGE. The disordered stretch occupies residues 1-35; that stretch reads MSQEKVQRHGGGDGEEESGPEAAGQERREKLGEDV. The tract at residues 20 to 57 is ARC ATPase binding; it reads PEAAGQERREKLGEDVDAILDEIDDVLEENAEDFVRAY. Residues 25-51 are a coiled coil; it reads QERREKLGEDVDAILDEIDDVLEENAE. Deamidated glutamine is present on glutamine 63. An Isoglutamyl lysine isopeptide (Gln-Lys) (interchain with K-? in acceptor proteins) cross-link involves residue glutamine 63.

This sequence belongs to the prokaryotic ubiquitin-like protein family. As to quaternary structure, strongly interacts with the proteasome-associated ATPase ARC through a hydrophobic interface; the interacting region of Pup lies in its C-terminal half. There is one Pup binding site per ARC hexamer ring. Post-translationally, is modified by deamidation of its C-terminal glutamine to glutamate by the deamidase Dop, a prerequisite to the subsequent pupylation process.

It functions in the pathway protein degradation; proteasomal Pup-dependent pathway. Its function is as follows. Protein modifier that is covalently attached to lysine residues of substrate proteins, thereby targeting them for proteasomal degradation. The tagging system is termed pupylation. The sequence is that of Prokaryotic ubiquitin-like protein Pup 1 from Saccharopolyspora erythraea (strain ATCC 11635 / DSM 40517 / JCM 4748 / NBRC 13426 / NCIMB 8594 / NRRL 2338).